The sequence spans 973 residues: Peptidyl-glycine alpha-amidating monooxygenase (973 aa).

An N-terminal signal peptide occupies residues 1–20; sequence MAGRVPSLLVLLVFPSSCLA. Positions 1-494 are peptidylglycine alpha-hydroxylating monooxygenase; sequence MAGRVPSLLV…EGTWEPEHTG (494 aa). A propeptide spanning residues 21-30 is cleaved from the precursor; that stretch reads FRSPLSVFKR. The Intragranular segment spans residues 31–863; the sequence is FKETTRPFSN…QKLIKEPGSG (833 aa). Cystine bridges form between cysteine 42–cysteine 181, cysteine 76–cysteine 121, cysteine 109–cysteine 126, cysteine 222–cysteine 329, and cysteine 288–cysteine 310. Cu(2+)-binding residues include histidine 102 and histidine 103. Positions 167, 237, 239, and 309 each coordinate Cu(2+). Residues 495–817 form a peptidyl-alpha-hydroxyglycine alpha-amidating lyase region; that stretch reads DFHMEEALDW…LTEKLEHRSV (323 aa). NHL repeat units lie at residues 498–541, 567–608, 617–662, and 670–714; these read MEEA…NSFD, AAVL…LDPN, LGRS…FSPS, and GEES…FKTD. Residue valine 517 coordinates Ca(2+). Position 530 (arginine 530) interacts with a protein. Histidine 582 serves as a coordination point for Zn(2+). Leucine 584 is a binding site for Ca(2+). Cysteine 631 and cysteine 652 are oxidised to a cystine. Tyrosine 651 is an a protein binding site. Residue histidine 687 coordinates Zn(2+). Cysteine 699 and cysteine 710 are disulfide-bonded. Arginine 703 lines the a protein pocket. An N-linked (GlcNAc...) asparagine glycan is attached at asparagine 762. The NHL 5 repeat unit spans residues 766–809; sequence GEIIDIFKPVRKHFDMPHDIVASEDGTVYIGDAHTNTVWKFTLT. Zn(2+) is bound at residue histidine 783. Position 784 (aspartate 784) interacts with Ca(2+). A helical transmembrane segment spans residues 864-887; it reads VPVVLITTLLVIPVVVLLAIAIFI. A sulfotyrosine mark is found at isoleucine 875 and arginine 893. Over 888 to 973 the chain is Cytoplasmic; that stretch reads RWKKSRAFGD…PLPALAPSSS (86 aa). Serine 918, serine 929, and serine 942 each carry phosphoserine. Residues 925 to 942 are interaction with RASSF9; sequence NFFASRKGYSRKGFDRLS. Residues 937 to 973 are disordered; the sequence is GFDRLSTEGSDQEKEDDGSESEEEYSAPLPALAPSSS. A Phosphothreonine modification is found at threonine 943. Residue serine 946 is modified to Phosphoserine; by UHMK1; in vitro. The span at 949–961 shows a compositional bias: acidic residues; it reads EKEDDGSESEEEY. Serine 957 is modified (phosphoserine). Low complexity predominate over residues 962–973; it reads SAPLPALAPSSS.

This sequence in the C-terminal section; belongs to the peptidyl-alpha-hydroxyglycine alpha-amidating lyase family. In the N-terminal section; belongs to the copper type II ascorbate-dependent monooxygenase family. In terms of assembly, monomer. Interacts with RASSF9. Requires Zn(2+) as cofactor. Cu(2+) serves as cofactor.

The protein resides in the cytoplasmic vesicle. The protein localises to the secretory vesicle membrane. It is found in the membrane. It localises to the secreted. The catalysed reaction is a [peptide]-C-terminal glycine + 2 L-ascorbate + O2 = a [peptide]-C-terminal (2S)-2-hydroxyglycine + 2 monodehydro-L-ascorbate radical + H2O. It carries out the reaction a [peptide]-C-terminal (2S)-2-hydroxyglycine = a [peptide]-C-terminal amide + glyoxylate. It catalyses the reaction N-dodecanoylglycine + 2 L-ascorbate + O2 = N-dodecanoyl-(2S)-hydroxyglycine + 2 monodehydro-L-ascorbate radical + H2O. The enzyme catalyses N-dodecanoyl-(2S)-hydroxyglycine = dodecanamide + glyoxylate. The catalysed reaction is N-(9Z,12Z,15Z)-octadecatrienoylglycine + 2 L-ascorbate + O2 = N-(9Z,12Z,15Z)-octadecatrienoyl-(2S)-hydroxyglycine + 2 monodehydro-L-ascorbate radical + H2O. It carries out the reaction N-(9Z,12Z,15Z)-octadecatrienoyl-(2S)-hydroxyglycine = (9Z,12Z,15Z)-octadecatrienamide + glyoxylate. It catalyses the reaction N-(9Z-octadecenoyl)glycine + 2 L-ascorbate + O2 = N-(9Z-octadecenoyl)-(2S)-hydroxyglycine + 2 monodehydro-L-ascorbate radical + H2O. The enzyme catalyses N-(9Z-octadecenoyl)-(2S)-hydroxyglycine = (9Z)-octadecenamide + glyoxylate. The catalysed reaction is N-tetradecanoylglycine + 2 L-ascorbate + O2 = N-tetradecanoyl-(2S)-hydroxyglycine + 2 monodehydro-L-ascorbate radical + H2O. It carries out the reaction N-tetradecanoyl-(2S)-hydroxyglycine = tetradecamide + glyoxylate. It catalyses the reaction N-decanoylglycine + 2 L-ascorbate + O2 = N-decanoyl-(2S)-hydroxyglycine + 2 monodehydro-L-ascorbate radical + H2O. The enzyme catalyses N-decanoyl-(2S)-hydroxyglycine = decanamide + glyoxylate. The catalysed reaction is N-octanoylglycine + 2 L-ascorbate + O2 = N-octanoyl-(2S)-hydroxyglycine + 2 monodehydro-L-ascorbate radical + H2O. It carries out the reaction N-octanoyl-(2S)-hydroxyglycine = octanamide + glyoxylate. PAM activity is inhibited by EDTA, phenylglyoxal and diethyl pyrocarbonate. PAL activity is stimulated by cadmium and inhibited by mercury. In terms of biological role, bifunctional enzyme that catalyzes amidation of the C-terminus of proteins. Alpha-amidation is present at the C-terminus of many endocrine hormones and neuropeptides and is required for their activity. C-terminal amidation also takes place in response to protein fragmentation triggered by oxidative stress, promoting degradation of amidated protein fragments by the proteasome. Alpha-amidation involves two sequential reactions, both of which are catalyzed by separate catalytic domains of the enzyme. The first step, catalyzed by peptidyl alpha-hydroxylating monooxygenase (PHM) domain, is the copper-, ascorbate-, and O2- dependent stereospecific hydroxylation (with S stereochemistry) at the alpha-carbon (C-alpha) of the C-terminal glycine of the peptidylglycine substrate. The second step, catalyzed by the peptidylglycine amidoglycolate lyase (PAL) domain, is the zinc-dependent cleavage of the N-C-alpha bond, producing the alpha-amidated peptide and glyoxylate. Similarly, catalyzes the two-step conversion of an N-fatty acylglycine to a primary fatty acid amide and glyoxylate. The sequence is that of Peptidyl-glycine alpha-amidating monooxygenase from Homo sapiens (Human).